We begin with the raw amino-acid sequence, 194 residues long: Imidazoleglycerol-phosphate dehydratase (194 aa).

This sequence belongs to the imidazoleglycerol-phosphate dehydratase family.

It is found in the cytoplasm. It carries out the reaction D-erythro-1-(imidazol-4-yl)glycerol 3-phosphate = 3-(imidazol-4-yl)-2-oxopropyl phosphate + H2O. The protein operates within amino-acid biosynthesis; L-histidine biosynthesis; L-histidine from 5-phospho-alpha-D-ribose 1-diphosphate: step 6/9. The polypeptide is Imidazoleglycerol-phosphate dehydratase (Lacticaseibacillus casei (strain BL23) (Lactobacillus casei)).